The primary structure comprises 901 residues: Pyruvate, phosphate dikinase (901 aa).

The tract at residues 1–321 is N-terminal; the sequence is MNIAKSIHFL…WLIEQKPVEA (321 aa). Positions 322–380 are linker 1; that stretch reads KSTISLVRLLLDLYEREVVDAEYVVKSVKPGQLNEILHPVIDMTSVTGLKSSQGGIIGV. The tract at residues 381–482 is central; the sequence is PGAAVGRVYF…TINEGDFVTL (102 aa). Phosphoserine; by PDRP1 is present on Ser-440. His-442 (tele-phosphohistidine intermediate) is an active-site residue. Residues 483-522 are linker 2; it reads NVPYYGESTLYMGAAQLIEPDPETSGLVSFIELAKGFVRS. The C-terminal stretch occupies residues 523–901; it reads FHVRANADSP…SAKSGGRRAR (379 aa). Substrate is bound by residues Arg-550, Arg-606, Glu-750, Gly-771, Thr-772, Asn-773, and Asp-774. Glu-750 is a binding site for Mg(2+). Asp-774 contacts Mg(2+). The active-site Proton donor is Cys-835. The tract at residues 879–901 is disordered; sequence EKEGRKPAWRGRSSAKSGGRRAR.

Belongs to the PEP-utilizing enzyme family. In terms of assembly, homodimer. Requires Mg(2+) as cofactor. Phosphorylation of Ser-440 in the dark inactivates the enzyme. Dephosphorylation upon light stimulation reactivates the enzyme.

It catalyses the reaction pyruvate + phosphate + ATP = phosphoenolpyruvate + AMP + diphosphate + H(+). Activated by light-induced dephosphorylation. Inhibited by dark-induced phosphorylation. Both reactions are catalyzed by PDRP1. In terms of biological role, catalyzes the reversible phosphorylation of pyruvate and phosphate. This Treponema pallidum (strain Nichols) protein is Pyruvate, phosphate dikinase (ppdK).